The chain runs to 195 residues: Phosphoheptose isomerase (195 aa).

Residues 36–195 (LVDSLKGDGI…IIEKELFGLD (160 aa)) enclose the SIS domain. 51 to 53 (NGG) provides a ligand contact to substrate. Zn(2+) is bound by residues histidine 60 and glutamate 64. Residues glutamate 64, 95–96 (ND), 121–123 (TTS), serine 126, and glutamine 173 each bind substrate. Zn(2+) contacts are provided by glutamine 173 and histidine 181.

It belongs to the SIS family. GmhA subfamily. It depends on Zn(2+) as a cofactor.

Its subcellular location is the cytoplasm. The catalysed reaction is 2 D-sedoheptulose 7-phosphate = D-glycero-alpha-D-manno-heptose 7-phosphate + D-glycero-beta-D-manno-heptose 7-phosphate. It functions in the pathway carbohydrate biosynthesis; D-glycero-D-manno-heptose 7-phosphate biosynthesis; D-glycero-alpha-D-manno-heptose 7-phosphate and D-glycero-beta-D-manno-heptose 7-phosphate from sedoheptulose 7-phosphate: step 1/1. Catalyzes the isomerization of sedoheptulose 7-phosphate in D-glycero-D-manno-heptose 7-phosphate. This is Phosphoheptose isomerase from Leptospira biflexa serovar Patoc (strain Patoc 1 / Ames).